Consider the following 489-residue polypeptide: Ketol-acid reductoisomerase (NADP(+)) (489 aa).

Residues 16 to 207 (IKKCRFMEKK…GGHRAGVLES (192 aa)) enclose the KARI N-terminal Rossmann domain. NADP(+) contacts are provided by residues 44 to 47 (CGSQ), arginine 67, serine 77, and 107 to 109 (DKQ). Histidine 131 is a catalytic residue. Glycine 157 is a binding site for NADP(+). KARI C-terminal knotted domains are found at residues 208 to 343 (SFVA…QSPD) and 344 to 483 (YDKK…MKNM). Residues aspartate 216, glutamate 220, glutamate 388, and glutamate 392 each contribute to the Mg(2+) site. Position 413 (serine 413) interacts with substrate.

This sequence belongs to the ketol-acid reductoisomerase family. Mg(2+) serves as cofactor.

It carries out the reaction (2R)-2,3-dihydroxy-3-methylbutanoate + NADP(+) = (2S)-2-acetolactate + NADPH + H(+). The catalysed reaction is (2R,3R)-2,3-dihydroxy-3-methylpentanoate + NADP(+) = (S)-2-ethyl-2-hydroxy-3-oxobutanoate + NADPH + H(+). Its pathway is amino-acid biosynthesis; L-isoleucine biosynthesis; L-isoleucine from 2-oxobutanoate: step 2/4. The protein operates within amino-acid biosynthesis; L-valine biosynthesis; L-valine from pyruvate: step 2/4. Its function is as follows. Involved in the biosynthesis of branched-chain amino acids (BCAA). Catalyzes an alkyl-migration followed by a ketol-acid reduction of (S)-2-acetolactate (S2AL) to yield (R)-2,3-dihydroxy-isovalerate. In the isomerase reaction, S2AL is rearranged via a Mg-dependent methyl migration to produce 3-hydroxy-3-methyl-2-ketobutyrate (HMKB). In the reductase reaction, this 2-ketoacid undergoes a metal-dependent reduction by NADPH to yield (R)-2,3-dihydroxy-isovalerate. The chain is Ketol-acid reductoisomerase (NADP(+)) from Buchnera aphidicola subsp. Diuraphis noxia.